The chain runs to 435 residues: Glutamyl-tRNA reductase (435 aa).

Residues 50-53 (TCNR), serine 110, 115-117 (ETQ), and glutamine 121 each bind substrate. The Nucleophile role is filled by cysteine 51. 189-194 (GAGEMS) serves as a coordination point for NADP(+).

The protein belongs to the glutamyl-tRNA reductase family. As to quaternary structure, homodimer.

It catalyses the reaction (S)-4-amino-5-oxopentanoate + tRNA(Glu) + NADP(+) = L-glutamyl-tRNA(Glu) + NADPH + H(+). It participates in porphyrin-containing compound metabolism; protoporphyrin-IX biosynthesis; 5-aminolevulinate from L-glutamyl-tRNA(Glu): step 1/2. Catalyzes the NADPH-dependent reduction of glutamyl-tRNA(Glu) to glutamate 1-semialdehyde (GSA). In Campylobacter lari (strain RM2100 / D67 / ATCC BAA-1060), this protein is Glutamyl-tRNA reductase.